Here is a 346-residue protein sequence, read N- to C-terminus: UPF0421 protein OB2406 (346 aa).

The next 4 membrane-spanning stretches (helical) occupy residues 16–36 (IAVL…VFAV), 55–75 (LIRF…IALF), 102–122 (LLVA…NYVM), and 128–148 (LFTT…LLPP).

The protein belongs to the UPF0421 family.

It localises to the cell membrane. The chain is UPF0421 protein OB2406 from Oceanobacillus iheyensis (strain DSM 14371 / CIP 107618 / JCM 11309 / KCTC 3954 / HTE831).